Here is a 559-residue protein sequence, read N- to C-terminus: Arginine--tRNA ligase (559 aa).

The 'HIGH' region motif lies at 116–126 (ANPNGPLHVGH).

It belongs to the class-I aminoacyl-tRNA synthetase family.

The protein localises to the cytoplasm. The catalysed reaction is tRNA(Arg) + L-arginine + ATP = L-arginyl-tRNA(Arg) + AMP + diphosphate. The polypeptide is Arginine--tRNA ligase (Methanosphaerula palustris (strain ATCC BAA-1556 / DSM 19958 / E1-9c)).